Reading from the N-terminus, the 87-residue chain is Phosphoribosyl-ATP pyrophosphatase (87 aa).

It belongs to the PRA-PH family.

The protein resides in the cytoplasm. The catalysed reaction is 1-(5-phospho-beta-D-ribosyl)-ATP + H2O = 1-(5-phospho-beta-D-ribosyl)-5'-AMP + diphosphate + H(+). The protein operates within amino-acid biosynthesis; L-histidine biosynthesis; L-histidine from 5-phospho-alpha-D-ribose 1-diphosphate: step 2/9. This Salinibacter ruber (strain DSM 13855 / M31) protein is Phosphoribosyl-ATP pyrophosphatase.